A 274-amino-acid chain; its full sequence is Ribonucleoside-diphosphate reductase small chain (274 aa).

Fe cation-binding residues include Asp-70, Glu-101, and His-104. Tyr-108 is an active-site residue. Residues Glu-163, Glu-197, and His-200 each coordinate Fe cation.

Belongs to the ribonucleoside diphosphate reductase small chain family. As to quaternary structure, heterodimer of a large and a small chain. Fe cation serves as cofactor.

It carries out the reaction a 2'-deoxyribonucleoside 5'-diphosphate + [thioredoxin]-disulfide + H2O = a ribonucleoside 5'-diphosphate + [thioredoxin]-dithiol. Ribonucleoside-diphosphate reductase holoenzyme provides the precursors necessary for viral DNA synthesis. Allows virus growth in non-dividing cells. Catalyzes the biosynthesis of deoxyribonucleotides from the corresponding ribonucleotides. The protein is Ribonucleoside-diphosphate reductase small chain of Sus scrofa (Pig).